Reading from the N-terminus, the 221-residue chain is Uracil-DNA glycosylase (221 aa).

The Proton acceptor role is filled by Asp-65.

This sequence belongs to the uracil-DNA glycosylase (UDG) superfamily. UNG family.

It is found in the cytoplasm. The catalysed reaction is Hydrolyzes single-stranded DNA or mismatched double-stranded DNA and polynucleotides, releasing free uracil.. Its function is as follows. Excises uracil residues from the DNA which can arise as a result of misincorporation of dUMP residues by DNA polymerase or due to deamination of cytosine. In Flavobacterium johnsoniae (strain ATCC 17061 / DSM 2064 / JCM 8514 / BCRC 14874 / CCUG 350202 / NBRC 14942 / NCIMB 11054 / UW101) (Cytophaga johnsonae), this protein is Uracil-DNA glycosylase.